The sequence spans 917 residues: Translation initiation factor IF-2 (917 aa).

The segment at 1–312 is disordered; sequence MEEQKSIKET…KGGREENENT (312 aa). A compositionally biased stretch (basic residues) spans 20–30; it reads TKKKLVIKKKA. Residues 41–59 are compositionally biased toward polar residues; sequence PGAQGQTTATEAKQSSPAS. Composition is skewed to basic and acidic residues over residues 60 to 76 and 95 to 118; these read SDKKKDLNELIREEAKR and RPDRKPEPLPQPDREKAPMDRKPE. Gly residues-rich tracts occupy residues 132 to 141, 167 to 256, and 281 to 293; these read SGGGQGGGNQ, QTGG…GYQG, and APGGLPGAGGPGG. A compositionally biased stretch (basic and acidic residues) spans 297–312; that stretch reads RVFDKEKGGREENENT. A tr-type G domain is found at 414–587; it reads TRPPVVTIMG…ELLDHKANPK (174 aa). The segment at 423–430 is G1; it reads GHVDHGKT. Position 423 to 430 (423 to 430) interacts with GTP; that stretch reads GHVDHGKT. Residues 448–452 form a G2 region; sequence GITQH. Positions 469-472 are G3; the sequence is DTPG. Residues 469–473 and 523–526 contribute to the GTP site; these read DTPGH and NKID. A G4 region spans residues 523–526; sequence NKID. Residues 559–561 form a G5 region; it reads SAK.

This sequence belongs to the TRAFAC class translation factor GTPase superfamily. Classic translation factor GTPase family. IF-2 subfamily.

The protein localises to the cytoplasm. Its function is as follows. One of the essential components for the initiation of protein synthesis. Protects formylmethionyl-tRNA from spontaneous hydrolysis and promotes its binding to the 30S ribosomal subunits. Also involved in the hydrolysis of GTP during the formation of the 70S ribosomal complex. The sequence is that of Translation initiation factor IF-2 from Leptospira biflexa serovar Patoc (strain Patoc 1 / ATCC 23582 / Paris).